Consider the following 965-residue polypeptide: Klaroid protein (965 aa).

The interval 1-20 (MSENTYQIETRRRSRSKTPF) is disordered. Transmembrane regions (helical) follow at residues 303-323 (TIGGGLASLLRYLYVFIGSVL) and 343-363 (FLIFLLILLPLLLLSGWLLLQ). Positions 585 to 612 (SSDAEVQIERLNREIAFIKLALSDKQAE) form a coiled coil. The region spanning 801-963 (GGQILSTRCT…YRFRVHGKPP (163 aa)) is the SUN domain.

In terms of assembly, core component of the LINC complex which is composed of inner nuclear membrane SUN domain-containing proteins coupled to outer nuclear membrane KASH domain-containing nesprins. In terms of tissue distribution, expressed in all cells in the eye disk.

It is found in the membrane. The protein localises to the cytoplasm. It localises to the cytoskeleton. The protein resides in the microtubule organizing center. Its subcellular location is the perinuclear region. Its function is as follows. Component of the LINC (LInker of Nucleoskeleton and Cytoskeleton) complex involved in the connection between the nuclear lamina and the cytoskeleton. Is required to nuclear migration in eye and to anchor klar in the nuclear membrane. In Drosophila melanogaster (Fruit fly), this protein is Klaroid protein.